We begin with the raw amino-acid sequence, 505 residues long: Maturase K (505 aa).

Belongs to the intron maturase 2 family. MatK subfamily.

Its subcellular location is the plastid. It is found in the chloroplast. Its function is as follows. Usually encoded in the trnK tRNA gene intron. Probably assists in splicing its own and other chloroplast group II introns. The protein is Maturase K of Cubanola domingensis.